The primary structure comprises 271 residues: Glutamate racemase (271 aa).

Residues 12–13 (DS) and 44–45 (YG) each bind substrate. Residue cysteine 75 is the Proton donor/acceptor of the active site. 76–77 (NT) lines the substrate pocket. Cysteine 185 serves as the catalytic Proton donor/acceptor. A substrate-binding site is contributed by 186 to 187 (TH).

The protein belongs to the aspartate/glutamate racemases family.

It carries out the reaction L-glutamate = D-glutamate. Its pathway is cell wall biogenesis; peptidoglycan biosynthesis. In terms of biological role, provides the (R)-glutamate required for cell wall biosynthesis. The protein is Glutamate racemase of Mycobacterium marinum (strain ATCC BAA-535 / M).